Reading from the N-terminus, the 734-residue chain is Cullin-4 (734 aa).

Positions Asp666–Asp728 constitute a Cullin neddylation domain. Residue Lys680 forms a Glycyl lysine isopeptide (Lys-Gly) (interchain with G-Cter in NEDD8) linkage.

The protein belongs to the cullin family. In terms of assembly, component of the Clr4 methyltransferase complex (ClrC) composed of at least clr4, rik1, pcu4, rbx1, raf1 and raf2. The cullin pcu4, rik1, raf1, raf2 and the ring-box protein rbx1 are components of an E3 ubiquitin ligase, whose activity is essential for heterochromatin assembly. In terms of processing, neddylated; enhancing the ubiquitin-ligase activity.

The protein localises to the cytoplasm. Its subcellular location is the nucleus. The protein resides in the chromosome. It participates in protein modification; protein ubiquitination. Its function is as follows. Required, indirectly, for activation of ribonucleotide reductase through the degradation of the protein spd1, thereby supplying deoxyribonucleotides for DNA replication and repair. Also has a role as a scaffold for assembling ubiquitin ligases. Component of the Clr4 methyltransferase complex (ClrC) which contributes to the establishment of heterochromatin by specifically methylating histone H3 to form H3K9me. ClrC preferentially ubiquitylates H3K14 and ClrC-mediated H3 ubiquitination promotes clr4 methyltransferase activity for the methylation of H3K9. H3K9me represents a specific tag for epigenetic transcriptional repression by recruiting swi6/HP1 to methylated histones which leads to transcriptional silencing within centromeric heterochromatin, telomeric regions and at the silent mating-type loci. This is Cullin-4 (pcu4) from Schizosaccharomyces pombe (strain 972 / ATCC 24843) (Fission yeast).